The following is a 315-amino-acid chain: Trimethylguanosine synthase (315 aa).

Residues 1-58 (MGRTFIHASKIKHAARKRKHHSNFRTLIKLLNNDAYKIESSKPLKNGKLFKYWKNRRR) form a required for correct nucleolar localization region. S-adenosyl-L-methionine is bound at residue Asp126. The segment at 271-315 (TENSRRESSEKEELSSENEELSKRKKHESTTTTKDNTVDIYDVNG) is disordered. A compositionally biased stretch (basic and acidic residues) spans 273–284 (NSRRESSEKEEL).

It belongs to the methyltransferase superfamily. Trimethylguanosine synthase family. In terms of assembly, monomer. Interacts with the spliceosomal snRNP core component SMB1 and the snoRNP components CBF5 and NOP58.

Its subcellular location is the nucleus. It localises to the nucleolus. The catalysed reaction is a 5'-end (N(7)-methyl 5'-triphosphoguanosine)-ribonucleoside in snRNA + S-adenosyl-L-methionine = a 5'-end (N(2),N(7)-dimethyl 5'-triphosphoguanosine)-ribonucleoside in snRNA + S-adenosyl-L-homocysteine + H(+). It carries out the reaction a 5'-end (N(7)-methyl 5'-triphosphoguanosine)-ribonucleoside in snoRNA + S-adenosyl-L-methionine = a 5'-end (N(2),N(7)-dimethyl 5'-triphosphoguanosine)-ribonucleoside in snoRNA + S-adenosyl-L-homocysteine + H(+). The enzyme catalyses a 5'-end (N(2),N(7)-dimethyl 5'-triphosphoguanosine)-ribonucleoside in snRNA + S-adenosyl-L-methionine = a 5'-end (N(2),N(2),N(7)-trimethyl 5'-triphosphoguanosine)-ribonucleoside in snRNA + S-adenosyl-L-homocysteine + H(+). It catalyses the reaction a 5'-end (N(2),N(7)-dimethyl 5'-triphosphoguanosine)-ribonucleoside in snoRNA + S-adenosyl-L-methionine = a 5'-end (N(2),N(2),N(7)-trimethyl 5'-triphosphoguanosine)-ribonucleoside in snoRNA + S-adenosyl-L-homocysteine + H(+). Substrate inhibited by S-adenosyl-L-homocysteine. Catalyzes the two serial methylation steps for the conversion of the 7-monomethylguanosine (m(7)G) caps of snRNAs and snoRNAs to a 2,2,7-trimethylguanosine (m(2,2,7)G) cap structure. The enzyme is specific for guanine, and N7 methylation must precede N2 methylation. Hypermethylates the m3G cap on TLC1 telomerase which affects telomere silencing and telomere length regulation. Required for pre-mRNA splicing, pre-rRNA processing and small ribosomal subunit synthesis. Involved in nucleolar structural organization. The sequence is that of Trimethylguanosine synthase (TGS1) from Saccharomyces cerevisiae (strain ATCC 204508 / S288c) (Baker's yeast).